We begin with the raw amino-acid sequence, 37 residues long: Large ribosomal subunit protein bL36c (37 aa).

It belongs to the bacterial ribosomal protein bL36 family.

The protein localises to the plastid. The protein resides in the chloroplast. The protein is Large ribosomal subunit protein bL36c of Psilotum nudum (Whisk fern).